The sequence spans 460 residues: MQKTYLWALVSLLASSLVDARSAVFDQTPLDIGGSDDSFDSIARIDPNSNDLLKSEMDKVIASSELLSLHRALVEIKSISDNEQAVGGFLMDYLYSKNFTVEKQFVDYDDPTGKPIRTNRRFNIYAYPGNSASPGIILTSHIDTVPPFIPYSLSHPEPASFKREDILISGRGTVDDKASVACQVIAAMDHLEKHPDIPIGLLFVVSEEVGGRGMSTFSNSRLNSGTYHTIIFGEPTERALVAGHKGMVSFTIRVHGKPAHSGYPWLGRSAVSEMLPILTEVDRLGDIPVSQGGLPSSEKYGRTTLNIGFMSGGVAANVVAEEAVANVAVRLAAGDPEDAKDIIFRAIRNAATKHRKDATVVISNGLERPKGDIEVIFGLEAYGVVDIDADVDGFNVTTVNYGTDIPHWKIYGDNVKRYLYGPGTIFVAHGKNEALTVGELEAGLEGYKTLVAKAAERERS.

A signal peptide spans 1–22 (MQKTYLWALVSLLASSLVDARS). N-linked (GlcNAc...) asparagine glycosylation is present at N98. D175 is a Zn(2+) binding site. Catalysis depends on E207, which acts as the Proton acceptor. E208 serves as a coordination point for Zn(2+). N-linked (GlcNAc...) asparagine glycosylation is present at N395.

The protein belongs to the peptidase M20A family. Zn(2+) serves as cofactor.

The protein localises to the secreted. This Trichophyton verrucosum (strain HKI 0517) protein is Probable carboxypeptidase TRV_02791.